Here is a 1160-residue protein sequence, read N- to C-terminus: Transcription factor tau 138 kDa subunit (1160 aa).

The disordered stretch occupies residues 475–533 (PNSKKTPNKNKRKRQVKNSTNASVAGNISNPKRIKLEQHVSTAQEPKSAEDSPSSNGGT). The span at 480 to 490 (TPNKNKRKRQV) shows a compositional bias: basic residues. Polar residues-rich tracts occupy residues 491–504 (KNSTNASVAGNISN) and 513–529 (HVSTAQEPKSAEDSPSS). S546 carries the phosphoserine modification.

Component of the TFIIIC complex composed of TFC1, TFC3, TFC4, TFC6, TFC7 and TFC8. The subunits are organized in two globular domains, tauA and tauB, connected by a proteolysis-sensitive and flexible linker. Interacts with TFC1, TFC4 and TFC6.

Its subcellular location is the nucleus. The protein resides in the mitochondrion. Functionally, TFIIIC mediates tRNA and 5S RNA gene activation by binding to intragenic promoter elements. Upstream of the transcription start site, TFIIIC assembles the initiation complex TFIIIB-TFIIIC-tDNA, which is sufficient for RNA polymerase III recruitment and function. Part of the tauB domain of TFIIIC that binds boxB DNA promoter sites of tRNA and similar genes. TFC3 is essential for cell viability. Cooperates with TFC6 in DNA binding. This is Transcription factor tau 138 kDa subunit (TFC3) from Saccharomyces cerevisiae (strain ATCC 204508 / S288c) (Baker's yeast).